Consider the following 315-residue polypeptide: Probable cell division protein WhiA (315 aa).

A DNA-binding region (H-T-H motif) is located at residues 280–313 (SLKELGQMLDPQVGKSGINHRLRKIEKIAEELRT).

It belongs to the WhiA family.

Involved in cell division and chromosome segregation. The polypeptide is Probable cell division protein WhiA (Clostridium botulinum (strain Alaska E43 / Type E3)).